The primary structure comprises 332 residues: Cytoskeleton protein RodZ (332 aa).

Topologically, residues 1 to 111 are cytoplasmic; sequence MNTETTQDTT…LKKSRKKRDG (111 aa). Residues 19–71 form the HTH cro/C1-type domain; that stretch reads LREARERLGLTQQTIAERLCLKITTVRDIEDGTTPADLAPTFLRGYIRSYAKL. Positions 30–49 form a DNA-binding region, H-T-H motif; the sequence is QQTIAERLCLKITTVRDIED. A helical; Signal-anchor for type II membrane protein transmembrane segment spans residues 112–132; sequence WLMIITWLVVLVVLGLTGAWW. Residues 133–332 lie on the Periplasmic side of the membrane; sequence WQNHQAQQAE…QVARLTLTAE (200 aa). The disordered stretch occupies residues 149–225; it reads HASSMQSQTE…PSQANATQSQ (77 aa). Composition is skewed to polar residues over residues 151 to 160 and 168 to 182; these read SSMQSQTEGQ and SAPQ…AATP. Residues 190 to 225 are compositionally biased toward low complexity; that stretch reads SATIAATPSTPPSSTTASSAAPSSQSPSQANATQSQ.

It belongs to the RodZ family.

It localises to the cell inner membrane. In terms of biological role, cytoskeletal protein that is involved in cell-shape control through regulation of the length of the long axis. The sequence is that of Cytoskeleton protein RodZ from Pectobacterium atrosepticum (strain SCRI 1043 / ATCC BAA-672) (Erwinia carotovora subsp. atroseptica).